The sequence spans 330 residues: Phenylalanine--tRNA ligase alpha subunit (330 aa).

E246 is a binding site for Mg(2+).

It belongs to the class-II aminoacyl-tRNA synthetase family. Phe-tRNA synthetase alpha subunit type 1 subfamily. As to quaternary structure, tetramer of two alpha and two beta subunits. Mg(2+) serves as cofactor.

It localises to the cytoplasm. It carries out the reaction tRNA(Phe) + L-phenylalanine + ATP = L-phenylalanyl-tRNA(Phe) + AMP + diphosphate + H(+). This Wolinella succinogenes (strain ATCC 29543 / DSM 1740 / CCUG 13145 / JCM 31913 / LMG 7466 / NCTC 11488 / FDC 602W) (Vibrio succinogenes) protein is Phenylalanine--tRNA ligase alpha subunit.